A 308-amino-acid polypeptide reads, in one-letter code: Mitochondrial import receptor subunit TOM40B (308 aa).

Positions 1 to 29 are disordered; that stretch reads MGNTLGLAPMGALPRRSPRREEPLPNPGS. Residues 281-308 are required for mitochondrial targeting; the sequence is PLPVTLALGAFLNHWRNRFHCGFSITVG.

Belongs to the Tom40 family. As to quaternary structure, forms part of the preprotein translocase of the outer mitochondrial membrane (TOM complex) containing TOMM22, TOMM40, TOMM40L and TOMM70. Interacts with mitochondrial targeting sequences.

The protein resides in the mitochondrion outer membrane. Functionally, potential channel-forming protein implicated in import of protein precursors into mitochondria. The chain is Mitochondrial import receptor subunit TOM40B from Bos taurus (Bovine).